Here is a 127-residue protein sequence, read N- to C-terminus: Transthyretin (127 aa).

At Cys10 the chain carries Sulfocysteine. Lys15 contributes to the L-thyroxine binding site. At Glu42 the chain carries 4-carboxyglutamate. Residue Glu54 participates in L-thyroxine binding. A glycan (N-linked (GlcNAc...) asparagine) is linked at Asn98. L-thyroxine is bound at residue Ser117.

It belongs to the transthyretin family. In terms of assembly, homotetramer. Dimer of dimers. In the homotetramer, subunits assemble around a central channel that can accommodate two ligand molecules. Interacts with RBP4. Sulfonation of the reactive cysteine Cys-10 enhances the stability of the native conformation of TTR, avoiding misassembly of the protein leading to amyloid formation. Detected in serum (at protein level).

The protein localises to the secreted. Its function is as follows. Thyroid hormone-binding protein. Probably transports thyroxine from the bloodstream to the brain. This Oryctolagus cuniculus (Rabbit) protein is Transthyretin (TTR).